We begin with the raw amino-acid sequence, 395 residues long: Probable isocitrate dehydrogenase [NAD] gamma 2, mitochondrial (395 aa).

The N-terminal 25 residues, 1–25, are a transit peptide targeting the mitochondrion; it reads MLAAGSCSVRTILQPALLLGHSREV. T117 provides a ligand contact to citrate. Substrate contacts are provided by R133, R164, and D251. D251 is a Mn(2+) binding site. An ADP-binding site is contributed by N321.

Belongs to the isocitrate and isopropylmalate dehydrogenases family. Heterooligomer of subunits alpha (IDH3A), beta (IDH3B), and gamma (IDH3G) in the apparent ratio of 2:1:1. The heterodimer containing one IDH3A and one IDH3B subunit and the heterodimer containing one IDH3A and one IDH3G subunit assemble into a heterotetramer (which contains two subunits of IDH3A, one of IDH3B and one of IDH3G) and further into the heterooctamer. Mg(2+) is required as a cofactor. Requires Mn(2+) as cofactor.

The protein resides in the mitochondrion. Its activity is regulated as follows. The heterotetramer and the heterodimer composed of IDH3A and IDH3G subunits can be allosterically activated by citrate (CIT) or/and ADP, and the two activators can act independently or synergistically. The heterodimer composed of IDH3A and IDH3B subunits cannot be allosterically regulated and the allosteric regulation of the heterotetramer is through the IDH3G subunit and not the IDH3B subunit. The IDH3G subunit contains the allosteric site which consists of a CIT-binding site and an ADP-binding site, and the binding of CIT and ADP causes conformational changes at the allosteric site which are transmitted to the active site in the catalytic subunit (IDH3A) through a cascade of conformational changes at the heterodimer interface, leading to stabilization of the isocitrate-binding at the active site and thus activation of the enzyme. ATP can activate the heterotetramer and the heterodimer composed of IDH3A and IDH3G subunits at low concentrations but inhibits their activities at high concentrations, whereas ATP exhibits only inhibitory effect on the heterodimer composed of IDH3A and IDH3B subunits. Functionally, regulatory subunit which plays a role in the allosteric regulation of the enzyme catalyzing the decarboxylation of isocitrate (ICT) into alpha-ketoglutarate. The heterodimer composed of the alpha (IDH3A) and beta (IDH3B) subunits and the heterodimer composed of the alpha (IDH3A) and gamma (IDH3G) subunits, have considerable basal activity but the full activity of the heterotetramer (containing two subunits of IDH3A, one of IDH3B and one of IDH3G) requires the assembly and cooperative function of both heterodimers. The protein is Probable isocitrate dehydrogenase [NAD] gamma 2, mitochondrial of Rattus norvegicus (Rat).